The chain runs to 140 residues: Large ribosomal subunit protein uL14 (140 aa).

Belongs to the universal ribosomal protein uL14 family. Component of the large ribosomal subunit.

It localises to the cytoplasm. Component of the large ribosomal subunit. The ribosome is a large ribonucleoprotein complex responsible for the synthesis of proteins in the cell. This is Large ribosomal subunit protein uL14 (rpl23) from Danio rerio (Zebrafish).